The chain runs to 539 residues: CTP synthase (539 aa).

Residues 1-268 are amidoligase domain; the sequence is MSFKSIFLTG…SDFLLNKLGF (268 aa). Serine 14 serves as a coordination point for CTP. Serine 14 provides a ligand contact to UTP. 15–20 lines the ATP pocket; that stretch reads SLGKGL. An L-glutamine-binding site is contributed by tyrosine 55. Aspartate 72 serves as a coordination point for ATP. Residues aspartate 72 and glutamate 142 each coordinate Mg(2+). CTP-binding positions include 149 to 151, 188 to 193, and lysine 224; these read DIE and KTKPTQ. UTP contacts are provided by residues 188-193 and lysine 224; that span reads KTKPTQ. Positions 294 to 532 constitute a Glutamine amidotransferase type-1 domain; sequence RIGLVGKYLE…IRAAKAYSLE (239 aa). Glycine 353 contributes to the L-glutamine binding site. Cysteine 380 (nucleophile; for glutamine hydrolysis) is an active-site residue. L-glutamine-binding positions include 381–384, glutamate 404, and arginine 460; that span reads LGMQ. Catalysis depends on residues histidine 505 and glutamate 507.

The protein belongs to the CTP synthase family. As to quaternary structure, homotetramer.

The catalysed reaction is UTP + L-glutamine + ATP + H2O = CTP + L-glutamate + ADP + phosphate + 2 H(+). The enzyme catalyses L-glutamine + H2O = L-glutamate + NH4(+). It carries out the reaction UTP + NH4(+) + ATP = CTP + ADP + phosphate + 2 H(+). It functions in the pathway pyrimidine metabolism; CTP biosynthesis via de novo pathway; CTP from UDP: step 2/2. Allosterically activated by GTP, when glutamine is the substrate; GTP has no effect on the reaction when ammonia is the substrate. The allosteric effector GTP functions by stabilizing the protein conformation that binds the tetrahedral intermediate(s) formed during glutamine hydrolysis. Inhibited by the product CTP, via allosteric rather than competitive inhibition. Catalyzes the ATP-dependent amination of UTP to CTP with either L-glutamine or ammonia as the source of nitrogen. Regulates intracellular CTP levels through interactions with the four ribonucleotide triphosphates. The chain is CTP synthase from Chlamydia trachomatis serovar L2 (strain ATCC VR-902B / DSM 19102 / 434/Bu).